The following is a 345-amino-acid chain: Anthranilate phosphoribosyltransferase (345 aa).

5-phospho-alpha-D-ribose 1-diphosphate is bound by residues glycine 84, 87–88, threonine 92, 94–97, 112–120, and serine 124; these read GD, NIST, and KHGGRSVSS. Glycine 84 contacts anthranilate. A Mg(2+)-binding site is contributed by serine 96. Residue arginine 170 coordinates anthranilate. Mg(2+) is bound by residues aspartate 229 and glutamate 230.

This sequence belongs to the anthranilate phosphoribosyltransferase family. As to quaternary structure, homodimer. Mg(2+) is required as a cofactor.

The enzyme catalyses N-(5-phospho-beta-D-ribosyl)anthranilate + diphosphate = 5-phospho-alpha-D-ribose 1-diphosphate + anthranilate. It participates in amino-acid biosynthesis; L-tryptophan biosynthesis; L-tryptophan from chorismate: step 2/5. Functionally, catalyzes the transfer of the phosphoribosyl group of 5-phosphorylribose-1-pyrophosphate (PRPP) to anthranilate to yield N-(5'-phosphoribosyl)-anthranilate (PRA). This is Anthranilate phosphoribosyltransferase from Leptothrix cholodnii (strain ATCC 51168 / LMG 8142 / SP-6) (Leptothrix discophora (strain SP-6)).